The sequence spans 372 residues: Cytochrome b (372 aa).

4 helical membrane-spanning segments follow: residues 25–45 (FGSM…FLAI), 69–90 (WIMQ…YIHI), 105–125 (WLSG…GYVL), and 170–190 (FFAL…IHII). Residues H75 and H89 each contribute to the heme b site. Heme b is bound by residues H174 and H188. H193 is a binding site for a ubiquinone. The next 4 helical transmembrane spans lie at 218–238 (YKDM…LSFL), 280–300 (LGGT…PFTH), 312–332 (LSQT…WTAT), and 339–358 (FITI…IMTP).

The protein belongs to the cytochrome b family. The cytochrome bc1 complex contains 3 respiratory subunits (MT-CYB, CYC1 and UQCRFS1), 2 core proteins (UQCRC1 and UQCRC2) and probably 6 low-molecular weight proteins. Heme b is required as a cofactor.

The protein resides in the mitochondrion inner membrane. Its function is as follows. Component of the ubiquinol-cytochrome c reductase complex (complex III or cytochrome b-c1 complex) that is part of the mitochondrial respiratory chain. The b-c1 complex mediates electron transfer from ubiquinol to cytochrome c. Contributes to the generation of a proton gradient across the mitochondrial membrane that is then used for ATP synthesis. This Aspidelaps scutatus (Shield-nose snake) protein is Cytochrome b (MT-CYB).